A 227-amino-acid chain; its full sequence is Cytochrome c oxidase subunit 2 (227 aa).

Topologically, residues 1 to 14 (MAYPFELGFQDATS) are mitochondrial intermembrane. Residues 15-45 (PIMEELLHFHDHTLMIVFLISSLVLYIISLM) form a helical membrane-spanning segment. Residues 46–59 (LTTKLTHTSTMDAQ) lie on the Mitochondrial matrix side of the membrane. A helical transmembrane segment spans residues 60 to 87 (EVETIWTILPAIILILIALPSLRILYMM). Residues 88–227 (DEINDPSLTV…HFENWSSSML (140 aa)) lie on the Mitochondrial intermembrane side of the membrane. Residues His161, Cys196, Glu198, Cys200, His204, and Met207 each contribute to the Cu cation site. Glu198 is a binding site for Mg(2+).

This sequence belongs to the cytochrome c oxidase subunit 2 family. In terms of assembly, component of the cytochrome c oxidase (complex IV, CIV), a multisubunit enzyme composed of 14 subunits. The complex is composed of a catalytic core of 3 subunits MT-CO1, MT-CO2 and MT-CO3, encoded in the mitochondrial DNA, and 11 supernumerary subunits COX4I, COX5A, COX5B, COX6A, COX6B, COX6C, COX7A, COX7B, COX7C, COX8 and NDUFA4, which are encoded in the nuclear genome. The complex exists as a monomer or a dimer and forms supercomplexes (SCs) in the inner mitochondrial membrane with NADH-ubiquinone oxidoreductase (complex I, CI) and ubiquinol-cytochrome c oxidoreductase (cytochrome b-c1 complex, complex III, CIII), resulting in different assemblies (supercomplex SCI(1)III(2)IV(1) and megacomplex MCI(2)III(2)IV(2)). Found in a complex with TMEM177, COA6, COX18, COX20, SCO1 and SCO2. Interacts with TMEM177 in a COX20-dependent manner. Interacts with COX20. Interacts with COX16. It depends on Cu cation as a cofactor.

It localises to the mitochondrion inner membrane. The enzyme catalyses 4 Fe(II)-[cytochrome c] + O2 + 8 H(+)(in) = 4 Fe(III)-[cytochrome c] + 2 H2O + 4 H(+)(out). Its function is as follows. Component of the cytochrome c oxidase, the last enzyme in the mitochondrial electron transport chain which drives oxidative phosphorylation. The respiratory chain contains 3 multisubunit complexes succinate dehydrogenase (complex II, CII), ubiquinol-cytochrome c oxidoreductase (cytochrome b-c1 complex, complex III, CIII) and cytochrome c oxidase (complex IV, CIV), that cooperate to transfer electrons derived from NADH and succinate to molecular oxygen, creating an electrochemical gradient over the inner membrane that drives transmembrane transport and the ATP synthase. Cytochrome c oxidase is the component of the respiratory chain that catalyzes the reduction of oxygen to water. Electrons originating from reduced cytochrome c in the intermembrane space (IMS) are transferred via the dinuclear copper A center (CU(A)) of subunit 2 and heme A of subunit 1 to the active site in subunit 1, a binuclear center (BNC) formed by heme A3 and copper B (CU(B)). The BNC reduces molecular oxygen to 2 water molecules using 4 electrons from cytochrome c in the IMS and 4 protons from the mitochondrial matrix. The polypeptide is Cytochrome c oxidase subunit 2 (MT-CO2) (Tamias amoenus (Yellow-pine chipmunk)).